A 129-amino-acid chain; its full sequence is Small ribosomal subunit protein uS9 (129 aa).

This sequence belongs to the universal ribosomal protein uS9 family.

This is Small ribosomal subunit protein uS9 from Helicobacter hepaticus (strain ATCC 51449 / 3B1).